Here is a 370-residue protein sequence, read N- to C-terminus: NSFL1 cofactor p47 (370 aa).

The disordered stretch occupies residues 54-73 (SQATPSSVSRGTAPSDNRVT). Phosphoserine is present on residues Ser-74, Ser-102, and Ser-114. Disordered stretches follow at residues 80 to 116 (HDQDEEEEEEEGQRFYAGGSERSGQQIVGPPRKKSPN) and 138 to 157 (TKSPGETSKPRPFAGGGYRL). The Nuclear localization signal motif lies at 109–115 (PPRKKSP). Ser-140 bears the Phosphoserine; by CDK1 mark. Tyr-167 bears the Phosphotyrosine mark. Positions 172-175 (RRRH) match the Nuclear localization signal motif. Ser-176, Ser-192, and Ser-272 each carry phosphoserine. The SEP domain maps to 179-244 (DVHVVLKLWK…MEDHRDEDFV (66 aa)). The 78-residue stretch at 291 to 368 (EAEPTTNIQI…NLLNAVIVQR (78 aa)) folds into the UBX domain.

The protein belongs to the NSFL1C family. As to quaternary structure, part of a ternary complex containing STX5A, NSFL1C and VCP. NSFL1C forms a homotrimer that binds to one end of a VCP homohexamer. The complex binds to membranes enriched in phosphatidylethanolamine-containing lipids and promotes Golgi membrane fusion. Interaction with VCIP135 leads to dissociation of the complex via ATP hydrolysis by VCP. Binds ubiquitin and mono-ubiquitinated proteins via its N-terminal UBA-like domain when bound to VCP. Post-translationally, phosphorylated during mitosis. Phosphorylation inhibits interaction with Golgi membranes and is required for the fragmentation of the Golgi stacks during mitosis. As to expression, highly expressed in heart, brain, spleen, lung, liver, muscle, kidney and testis.

The protein localises to the nucleus. It localises to the golgi apparatus. The protein resides in the golgi stack. It is found in the chromosome. Its subcellular location is the cytoplasm. The protein localises to the cytoskeleton. It localises to the microtubule organizing center. The protein resides in the centrosome. Reduces the ATPase activity of VCP. Necessary for the fragmentation of Golgi stacks during mitosis and for VCP-mediated reassembly of Golgi stacks after mitosis. May play a role in VCP-mediated formation of transitional endoplasmic reticulum (tER). Inhibits the activity of CTSL (in vitro). Together with UBXN2B/p37, regulates the centrosomal levels of kinase AURKA/Aurora A during mitotic progression by promoting AURKA removal from centrosomes in prophase. Also, regulates spindle orientation during mitosis. The protein is NSFL1 cofactor p47 (Nsfl1c) of Rattus norvegicus (Rat).